A 278-amino-acid chain; its full sequence is HTH-type transcriptional activator RhaS (278 aa).

In terms of domain architecture, HTH araC/xylS-type spans Asn-174–Gly-272. 2 consecutive DNA-binding regions (H-T-H motif) follow at residues Glu-191 to Thr-212 and Val-239 to Phe-262.

As to quaternary structure, binds DNA as a dimer.

It localises to the cytoplasm. Functionally, activates expression of the rhaBAD and rhaT operons. This chain is HTH-type transcriptional activator RhaS, found in Klebsiella pneumoniae (strain 342).